Here is a 148-residue protein sequence, read N- to C-terminus: D-aminoacyl-tRNA deacylase (148 aa).

A Gly-cisPro motif, important for rejection of L-amino acids motif is present at residues 137–138 (GP).

Belongs to the DTD family. In terms of assembly, homodimer.

The protein resides in the cytoplasm. It carries out the reaction glycyl-tRNA(Ala) + H2O = tRNA(Ala) + glycine + H(+). It catalyses the reaction a D-aminoacyl-tRNA + H2O = a tRNA + a D-alpha-amino acid + H(+). In terms of biological role, an aminoacyl-tRNA editing enzyme that deacylates mischarged D-aminoacyl-tRNAs. Also deacylates mischarged glycyl-tRNA(Ala), protecting cells against glycine mischarging by AlaRS. Acts via tRNA-based rather than protein-based catalysis; rejects L-amino acids rather than detecting D-amino acids in the active site. By recycling D-aminoacyl-tRNA to D-amino acids and free tRNA molecules, this enzyme counteracts the toxicity associated with the formation of D-aminoacyl-tRNA entities in vivo and helps enforce protein L-homochirality. This is D-aminoacyl-tRNA deacylase from Finegoldia magna (strain ATCC 29328 / DSM 20472 / WAL 2508) (Peptostreptococcus magnus).